We begin with the raw amino-acid sequence, 266 residues long: uncharacterized protein (266 aa).

This is an uncharacterized protein from Ostreid herpesvirus 1 (isolate France) (OsHV-1).